The chain runs to 37 residues: Large ribosomal subunit protein bL36 (37 aa).

The protein belongs to the bacterial ribosomal protein bL36 family.

In Tropheryma whipplei (strain Twist) (Whipple's bacillus), this protein is Large ribosomal subunit protein bL36.